A 295-amino-acid chain; its full sequence is ATP-dependent (S)-NAD(P)H-hydrate dehydratase (295 aa).

Residues 9 to 289 (LLERARNLVP…DQIHQVFDDL (281 aa)) enclose the YjeF C-terminal domain. (6S)-NADPHX is bound by residues Gly-109 and 162 to 168 (NAIEFCR). ATP-binding positions include 193-197 (KGLND) and 214-223 (GSGRRCGGQG). Asp-224 provides a ligand contact to (6S)-NADPHX.

Belongs to the NnrD/CARKD family. Requires Mg(2+) as cofactor.

The enzyme catalyses (6S)-NADHX + ATP = ADP + phosphate + NADH + H(+). It catalyses the reaction (6S)-NADPHX + ATP = ADP + phosphate + NADPH + H(+). In terms of biological role, catalyzes the dehydration of the S-form of NAD(P)HX at the expense of ATP, which is converted to ADP. Together with NAD(P)HX epimerase, which catalyzes the epimerization of the S- and R-forms, the enzyme allows the repair of both epimers of NAD(P)HX, a damaged form of NAD(P)H that is a result of enzymatic or heat-dependent hydration. The chain is ATP-dependent (S)-NAD(P)H-hydrate dehydratase from Anopheles darlingi (Mosquito).